Here is a 408-residue protein sequence, read N- to C-terminus: Cell division protein FtsZ 2 (408 aa).

Residues 130–132, Glu-169, Arg-173, and Asp-216 contribute to the GTP site; that span reads GTG.

Belongs to the FtsZ family. In terms of assembly, homodimer. Polymerizes to form a dynamic ring structure in a strictly GTP-dependent manner. Interacts directly with several other division proteins.

The protein resides in the cytoplasm. Its function is as follows. Essential cell division protein that forms a contractile ring structure (Z ring) at the future cell division site. The regulation of the ring assembly controls the timing and the location of cell division. One of the functions of the FtsZ ring is to recruit other cell division proteins to the septum to produce a new cell wall between the dividing cells. Binds GTP and shows GTPase activity. This Pyrococcus furiosus (strain ATCC 43587 / DSM 3638 / JCM 8422 / Vc1) protein is Cell division protein FtsZ 2.